We begin with the raw amino-acid sequence, 105 residues long: Prothymosin alpha-A (105 aa).

Residues 1–30 (MADTKVDTSKEVSAKDLKEKKQVEEAENGK) show a composition bias toward basic and acidic residues. A disordered region spans residues 1–105 (MADTKVDTSK…VDPKKQKTDV (105 aa)). Composition is skewed to acidic residues over residues 39-78 (ENEE…EEAE) and 87-96 (EDDDDDEDDV).

This sequence belongs to the pro/parathymosin family. As to expression, at the 20-somite stage (18 hpf), expressed on the dorsal side of the embryo in the developing central and peripheral nervous system (CNS and PNS), in the tail bud and the pronephric ducts. In the PNS, expressed in the otic vesicle, trigeminal ganglion and the anterior lateral line placode. Localized throughout the hindbrain, with highest expression in rhombomeres 3 and 4. In the head, expressed in the olfactory placode and in the diencephalic region. At the end of the segmentation period (20 hpf), expression begins in the newly forming endodermal pouches, and weakly in the pharyngeal arch precursor cells. During the early pharyngula period, expressed in the pectoral fin bud, the developing retina, and still present in the central nervous system and endodermal pouches. In the tail, expressed in the spinal cord and posterior lateral line precursors. Weakly expressed in the pronephric ducts, only in the corpuscles of Stanius. At 48 hpf, still expressed in the retina and brain, where expression is almost uniform. At this stage, expression is decreased in the spinal cord and is absent from the lateral line cells and pronephric ducts, but appears in the intestine and continues in the pharyngeal arches. In 72 hpf embryos, expression in the brain remains uniform but is restricted to amacrine cells in the retina. In the pharyngeal arches, expression continues to be limited to the ectodermal and endodermal covering cells.

The protein localises to the nucleus. This chain is Prothymosin alpha-A (ptmaa), found in Danio rerio (Zebrafish).